A 2155-amino-acid polypeptide reads, in one-letter code: Conidial pigment polyketide synthase PfmaE (2155 aa).

An N-terminal acylcarrier protein transacylase domain (SAT) region spans residues 8–245; it reads LLFGDQSLDT…TAIPVYGPYH (238 aa). Residues 381–813 form the Ketosynthase family 3 (KS3) domain; the sequence is KCKLAIVGMA…GGNTGLLLED (433 aa). Active-site for beta-ketoacyl synthase activity residues include cysteine 553, histidine 688, and histidine 731. The interval 910–1231 is malonyl-CoA:ACP transacylase (MAT) domain; that stretch reads AFMFTGQGSH…LCTLHSAGLN (322 aa). Serine 1001 functions as the For acyl/malonyl transferase activity in the catalytic mechanism. Residues 1293 to 1608 form a product template (PT) domain region; the sequence is TTTVQKVVRE…PRKVLNVVLP (316 aa). Residues 1297-1428 are N-terminal hotdog fold; it reads QKVVREEVKG…CKVFFGDNEE (132 aa). The 308-residue stretch at 1297–1604 folds into the PKS/mFAS DH domain; sequence QKVVREEVKG…FQAIPRKVLN (308 aa). Histidine 1329 serves as the catalytic Proton acceptor; for dehydratase activity. A C-terminal hotdog fold region spans residues 1455–1604; that stretch reads DASKIGRGLA…FQAIPRKVLN (150 aa). Aspartate 1516 functions as the Proton donor; for dehydratase activity in the catalytic mechanism. 2 Carrier domains span residues 1653-1730 and 1779-1856; these read LTKN…AQFE and GNVS…GIED. Residue serine 1690 is modified to O-(pantetheine 4'-phosphoryl)serine. Residues 1738-1782 form a disordered region; that stretch reads EENAHSSASSDSADMETESNFTTPSDDSEKDEVKGDAPAADGNVS. Serine 1816 is subject to O-(pantetheine 4'-phosphoryl)serine. The disordered stretch occupies residues 1855-1892; sequence EDKPKRAAPKSAKQEPAKPEPKVQGEAKAHTNPVDNYP. Over residues 1866–1883 the composition is skewed to basic and acidic residues; that stretch reads AKQEPAKPEPKVQGEAKA. A thioesterase (TE) domain region spans residues 1911-2041; the sequence is QLFMIPDGSG…LGEGDDAEAK (131 aa).

It participates in pigment biosynthesis; melanin biosynthesis. Functionally, non-reducing polyketide synthase; part of the gene cluster that mediates the biosynthesis of dihydroxynaphthalene (DHN)-melanin, a bluish-green pigment forming a dark layer in the conidial wall that protects the conidia from UV radiations. The first step of the pathway is the production of the pentaketide 1,3,6,8-tetrahydroxynaphthalene (1,3,6,8-THN or T4HN) by the polyketide synthase PfmaE though condensation of acetyl-CoA with malonyl-CoA. T4HN is not stable and easily oxidizes into the stable form flaviolin. T4HN is also substrate of the hydroxynaphthalene reductase PfmaG to yield scytalone. The scytalone dehydratase PfmaJ then reduces scytalone to 1,3,8-THN. 1,3,8-THN is then substrate of the hydroxynaphthalene reductase PfmaI to yield vermelone. Vermelone is further converted by the multicopper oxidase PfmaD to 1,8-DHN. Finally the laccase PFICI_06862 transforms 1,8-DHN to DHN-melanin. The roles of the 5-oxoprolinase PfmaA and the proline iminopeptidase PfmaB within the cluster have not been elucidated yet. The protein is Conidial pigment polyketide synthase PfmaE of Pestalotiopsis fici (strain W106-1 / CGMCC3.15140).